The sequence spans 201 residues: Glycerol-3-phosphate acyltransferase (201 aa).

6 helical membrane-spanning segments follow: residues 3–23 (TVLFALGAYLIGSISFAVVVS), 51–71 (KAAILTLLGDGAKGFLAVWLV), 85–105 (VALVAIAVFLGHLWPVFFRFV), 116–136 (VLLALNGWLGLATLVTWLVIA), 137–157 (YAFRYSSLAALIAAIFAPFYY), and 158–178 (GLLFGPDVILLAVLAMSILLV).

Belongs to the PlsY family. As to quaternary structure, probably interacts with PlsX.

Its subcellular location is the cell inner membrane. It catalyses the reaction an acyl phosphate + sn-glycerol 3-phosphate = a 1-acyl-sn-glycero-3-phosphate + phosphate. It functions in the pathway lipid metabolism; phospholipid metabolism. Its function is as follows. Catalyzes the transfer of an acyl group from acyl-phosphate (acyl-PO(4)) to glycerol-3-phosphate (G3P) to form lysophosphatidic acid (LPA). This enzyme utilizes acyl-phosphate as fatty acyl donor, but not acyl-CoA or acyl-ACP. The protein is Glycerol-3-phosphate acyltransferase of Janthinobacterium sp. (strain Marseille) (Minibacterium massiliensis).